A 95-amino-acid chain; its full sequence is Co-chaperonin GroES (95 aa).

Belongs to the GroES chaperonin family. As to quaternary structure, heptamer of 7 subunits arranged in a ring. Interacts with the chaperonin GroEL.

It is found in the cytoplasm. Together with the chaperonin GroEL, plays an essential role in assisting protein folding. The GroEL-GroES system forms a nano-cage that allows encapsulation of the non-native substrate proteins and provides a physical environment optimized to promote and accelerate protein folding. GroES binds to the apical surface of the GroEL ring, thereby capping the opening of the GroEL channel. The protein is Co-chaperonin GroES of Chlorobaculum parvum (strain DSM 263 / NCIMB 8327) (Chlorobium vibrioforme subsp. thiosulfatophilum).